Consider the following 383-residue polypeptide: Histidine decarboxylase (383 aa).

His-120 contributes to the substrate binding site. The residue at position 233 (Lys-233) is an N6-(pyridoxal phosphate)lysine.

This sequence belongs to the group II decarboxylase family. As to quaternary structure, homotetramer. Pyridoxal 5'-phosphate is required as a cofactor.

The catalysed reaction is L-histidine + H(+) = histamine + CO2. This is Histidine decarboxylase from Acinetobacter baumannii (strain ATCC 17978 / DSM 105126 / CIP 53.77 / LMG 1025 / NCDC KC755 / 5377).